The chain runs to 303 residues: Ribosomal RNA small subunit methyltransferase A (303 aa).

S-adenosyl-L-methionine contacts are provided by asparagine 37, valine 39, glycine 64, glutamate 85, aspartate 115, and asparagine 138.

Belongs to the class I-like SAM-binding methyltransferase superfamily. rRNA adenine N(6)-methyltransferase family. RsmA subfamily.

It localises to the cytoplasm. It carries out the reaction adenosine(1518)/adenosine(1519) in 16S rRNA + 4 S-adenosyl-L-methionine = N(6)-dimethyladenosine(1518)/N(6)-dimethyladenosine(1519) in 16S rRNA + 4 S-adenosyl-L-homocysteine + 4 H(+). In terms of biological role, specifically dimethylates two adjacent adenosines (A1518 and A1519) in the loop of a conserved hairpin near the 3'-end of 16S rRNA in the 30S particle. May play a critical role in biogenesis of 30S subunits. This Bifidobacterium adolescentis (strain ATCC 15703 / DSM 20083 / NCTC 11814 / E194a) protein is Ribosomal RNA small subunit methyltransferase A.